Here is a 269-residue protein sequence, read N- to C-terminus: Replication protein A 32 kDa subunit (269 aa).

The segment covering 1 to 22 (MSNRVQGGFDNNSGNNQSAQKQ) has biased composition (polar residues). The segment at 1–25 (MSNRVQGGFDNNSGNNQSAQKQQAE) is disordered. The segment at residues 69–149 (ITAKFEFLQS…AQIQLLYFSI (81 aa)) is a DNA-binding region (OB).

It belongs to the replication factor A protein 2 family. Component of the replication protein A complex (RPA), a heterotrimeric complex composed of RPA1, RPA2/TEB2 and RPA3/TEB3. Component of the telomerase holoenzyme complex, composed of the catalytic core (the catalytic subunit TERT, the telomerase RNA template component TER and TAP65/p65), which is associated with two heterotrimeric subcomplexes: (i) the replication protein A (RPA)-related subcomplex, composed of TEB1, RPA2/TEB2 and RPA3/TEB3 and (ii) the CST-like subcomplex, composed of TAP75/p75, TAP45/p45 and TAP19/p19. TEB1 and the CST-like subcomplex are tethered to the catalytic core by TAP50/p50.

It is found in the nucleus. The protein localises to the chromosome. Its subcellular location is the telomere. Functionally, component of the heterotrimeric replication protein A (RPA) and holoenzyme telomerase ribonucleoprotein complexes. As part of the RPA complex, binds and stabilizes single-stranded DNA (ssDNA) intermediates, that form during DNA replication or upon DNA stress. It prevents their reannealing and in parallel, recruits and activates different proteins and complexes involved in DNA metabolism. Thereby, it plays an essential role both in DNA replication and the cellular response to DNA damage. In the cellular response to DNA damage, the RPA complex controls DNA repair and DNA damage checkpoint activation. Also part of a subcomplex of the holoenzyme telomerase ribonucleoprotein complex: this subcomplex that contains TEB1, RPA2/TEB2, RPA3/TEB3, but not RPA1, mediates the recruitment of telomerase to telomeric DNA via specific interaction between TEB1 and telomeric ssDNA. In the holoenzyme telomerase ribonucleoprotein complex, RPA2/TEB2 and RPA3/TEB3 act as assembly factors for TEB1 incorporation into telomerase holoenzyme. In the holoenzyme telomerase ribonucleoprotein complex, RPA2/TEB2 does not contribute to ssDNA affinity, while it contributes to ssDNA affinity in the RPA complex. The polypeptide is Replication protein A 32 kDa subunit (RPA2) (Tetrahymena thermophila (strain SB210)).